We begin with the raw amino-acid sequence, 163 residues long: Nucleotide-binding protein MAP_4063c (163 aa).

This sequence belongs to the YajQ family.

Functionally, nucleotide-binding protein. The protein is Nucleotide-binding protein MAP_4063c of Mycolicibacterium paratuberculosis (strain ATCC BAA-968 / K-10) (Mycobacterium paratuberculosis).